The chain runs to 410 residues: Polyadenylation and cleavage factor homolog 5 (410 aa).

Residues 1–17 (MASNGSFSAQRNANAGT) show a composition bias toward polar residues. Positions 1–32 (MASNGSFSAQRNANAGTTMKRRNDNRGYGGGI) are disordered. Positions 191–214 (SKELTDLLSLLNNEKEKKTSEASN) form a coiled coil. A C2H2-type zinc finger spans residues 247 to 269 (RQCTSCGVRFKCQEEHSKHMDWH).

As to quaternary structure, forms a complex with cleavage and polyadenylation specificity factor (CPSF) subunits CSTF77, CLPS3, PCFS4 and PCFS1.

It localises to the nucleus. This Arabidopsis thaliana (Mouse-ear cress) protein is Polyadenylation and cleavage factor homolog 5.